The chain runs to 364 residues: Histidinol-phosphate aminotransferase (364 aa).

An N6-(pyridoxal phosphate)lysine modification is found at Lys224.

It belongs to the class-II pyridoxal-phosphate-dependent aminotransferase family. Histidinol-phosphate aminotransferase subfamily. Homodimer. Requires pyridoxal 5'-phosphate as cofactor.

It carries out the reaction L-histidinol phosphate + 2-oxoglutarate = 3-(imidazol-4-yl)-2-oxopropyl phosphate + L-glutamate. It participates in amino-acid biosynthesis; L-histidine biosynthesis; L-histidine from 5-phospho-alpha-D-ribose 1-diphosphate: step 7/9. This chain is Histidinol-phosphate aminotransferase, found in Anaeromyxobacter sp. (strain Fw109-5).